The sequence spans 202 residues: Superoxide dismutase [Mn/Fe] (202 aa).

H26, H80, D163, and H167 together coordinate Fe(3+). Residues H26, H80, D163, and H167 each coordinate Mn(2+).

The protein belongs to the iron/manganese superoxide dismutase family. In terms of assembly, homodimer. The cofactor is Mn(2+). Fe(3+) serves as cofactor.

It carries out the reaction 2 superoxide + 2 H(+) = H2O2 + O2. Functionally, destroys superoxide anion radicals which are normally produced within the cells and which are toxic to biological systems. Catalyzes the dismutation of superoxide anion radicals into O2 and H2O2 by successive reduction and oxidation of the transition metal ion at the active site. This is Superoxide dismutase [Mn/Fe] (sodB) from Methylomonas sp. (strain J).